The primary structure comprises 163 residues: MEGFLDLYLELNVPSPVEEATWHRWFEVWLRELGVTDPCELSLCLTSDEHIRQLNREFRHIDAPTDVLAFAAEETSTPVELQKITGVRLLGDIVISVPTACAQAKAQGQRLSRELAWLASHGLLHLLGWDHPDELSLQRMLQQQHHLLAAIQEDLEVTHGQQP.

The Zn(2+) site is built by His121, His125, and His131.

This sequence belongs to the endoribonuclease YbeY family. It depends on Zn(2+) as a cofactor.

It localises to the cytoplasm. Functionally, single strand-specific metallo-endoribonuclease involved in late-stage 70S ribosome quality control and in maturation of the 3' terminus of the 16S rRNA. The polypeptide is Endoribonuclease YbeY (Synechococcus sp. (strain JA-3-3Ab) (Cyanobacteria bacterium Yellowstone A-Prime)).